The primary structure comprises 177 residues: uncharacterized protein (177 aa).

2 stretches are compositionally biased toward low complexity: residues Asn-78–Asn-93 and Ser-120–Asn-130. The tract at residues Asn-78 to Asn-146 is disordered. Residues His-131–Asn-146 are compositionally biased toward basic residues.

This is an uncharacterized protein from Dictyostelium discoideum (Social amoeba).